The sequence spans 275 residues: Small ribosomal subunit protein uS3 (275 aa).

In terms of domain architecture, KH type-2 spans 38–106 (IRKLLATGLE…QVQLNILEVK (69 aa)). Residues 215-275 (AAAAPASDRP…AEAPAESTES (61 aa)) are disordered. Positions 237–275 (SGSAGTTATSTEAGRAATSDAPAAGTAAAAEAPAESTES) are enriched in low complexity.

The protein belongs to the universal ribosomal protein uS3 family. Part of the 30S ribosomal subunit. Forms a tight complex with proteins S10 and S14.

Binds the lower part of the 30S subunit head. Binds mRNA in the 70S ribosome, positioning it for translation. The polypeptide is Small ribosomal subunit protein uS3 (Mycolicibacterium smegmatis (strain ATCC 700084 / mc(2)155) (Mycobacterium smegmatis)).